The chain runs to 294 residues: Elongation factor Ts (294 aa).

The involved in Mg(2+) ion dislocation from EF-Tu stretch occupies residues 79–82 (TDFV).

This sequence belongs to the EF-Ts family.

It localises to the cytoplasm. Associates with the EF-Tu.GDP complex and induces the exchange of GDP to GTP. It remains bound to the aminoacyl-tRNA.EF-Tu.GTP complex up to the GTP hydrolysis stage on the ribosome. The sequence is that of Elongation factor Ts from Oceanobacillus iheyensis (strain DSM 14371 / CIP 107618 / JCM 11309 / KCTC 3954 / HTE831).